The chain runs to 284 residues: Probable tRNA-splicing endonuclease subunit sen34 (284 aa).

Active-site residues include Tyr-206, His-214, and Lys-245.

This sequence belongs to the tRNA-intron endonuclease family. In terms of assembly, heterotetramer composed of sen2, sen15, sen34 and sen54. Interacts directly with sen15.

The catalysed reaction is pretRNA = a 3'-half-tRNA molecule with a 5'-OH end + a 5'-half-tRNA molecule with a 2',3'-cyclic phosphate end + an intron with a 2',3'-cyclic phosphate and a 5'-hydroxyl terminus.. Functionally, constitutes one of the two catalytic subunit of the tRNA-splicing endonuclease complex, a complex responsible for identification and cleavage of the splice sites in pre-tRNA. It cleaves pre-tRNA at the 5'- and 3'-splice sites to release the intron. The products are an intron and two tRNA half-molecules bearing 2',3'-cyclic phosphate and 5'-OH termini. There are no conserved sequences at the splice sites, but the intron is invariably located at the same site in the gene, placing the splice sites an invariant distance from the constant structural features of the tRNA body. It probably carries the active site for 3'-splice site cleavage. This chain is Probable tRNA-splicing endonuclease subunit sen34 (sen34), found in Schizosaccharomyces pombe (strain 972 / ATCC 24843) (Fission yeast).